The chain runs to 234 residues: uncharacterized protein (234 aa).

2 disordered regions span residues 1–65 (MTSV…RRGP) and 182–234 (ARGA…GRKT).

This is an uncharacterized protein from Homo sapiens (Human).